A 154-amino-acid polypeptide reads, in one-letter code: Large ribosomal subunit protein uL15 (154 aa).

A disordered region spans residues 1–44 (MKLNELGNCKGATRNRKRVGRGIGSGTGKTSGRGVKGQKSRSGV). A compositionally biased stretch (gly residues) spans 21–35 (RGIGSGTGKTSGRGV).

Belongs to the universal ribosomal protein uL15 family. Part of the 50S ribosomal subunit.

Functionally, binds to the 23S rRNA. The chain is Large ribosomal subunit protein uL15 from Bartonella quintana (strain Toulouse) (Rochalimaea quintana).